The following is a 472-amino-acid chain: MKQEVILVLDCGATNVRAIAVNRQGKIVARASTPNASDIAMENNTWHQWSLDAILQRFADCCRQINSELTECHIRGIAVTTFGVDGALVDKQGNLLYPIISWKCPRTAAVMDNIERLISAQRLQAISGVGAFSFNTLYKLVWLKENHPQLLERAHAWLFISSLINHRLTGEFTTDITMAGTSQMLDIQQRDFSPQILQATGIPRRLFPRLVEAGEQIGTLQNSAAAMLGLPVGIPVISAGHDTQFALFGAGAEQNEPVLSSGTWEILMVRSAQVDTSLLSQYAGSTCELDSQAGLYNPGMQWLASGVLEWVRKLFWTAETPWQMLIEEARLIAPGADGVKMQCDLLSCQNAGWQGVTLNTTRGHFYRAALEGLTAQLQRNLQMLEKIGHFKASELLLVGGGSRNTLWNQIKANMLDIPVKVLDDAETTVAGAALFGWYGVGEFNSPEEARAQIHYQYRYFYPQTEPEFIEEV.

The protein belongs to the FGGY kinase family. Requires a divalent metal cation as cofactor.

It catalyses the reaction L-fuculose + ATP = L-fuculose 1-phosphate + ADP + H(+). It functions in the pathway carbohydrate degradation; L-fucose degradation; L-lactaldehyde and glycerone phosphate from L-fucose: step 2/3. Its function is as follows. Catalyzes the phosphorylation of L-fuculose. Can also phosphorylate, with lower efficiency, D-ribulose, D-xylulose and D-fructose. This is L-fuculokinase from Escherichia coli (strain K12).